We begin with the raw amino-acid sequence, 805 residues long: Leucine--tRNA ligase (805 aa).

Residues 40–51 (PYPSGAGLHVGH) carry the 'HIGH' region motif. Residues 576-580 (KMSKS) carry the 'KMSKS' region motif. Lys579 contributes to the ATP binding site.

This sequence belongs to the class-I aminoacyl-tRNA synthetase family.

It is found in the cytoplasm. The enzyme catalyses tRNA(Leu) + L-leucine + ATP = L-leucyl-tRNA(Leu) + AMP + diphosphate. The polypeptide is Leucine--tRNA ligase (Anoxybacillus flavithermus (strain DSM 21510 / WK1)).